A 41-amino-acid chain; its full sequence is Photosystem II reaction center protein X (41 aa).

The Lumenal segment spans residues 2–6; sequence TITPS. The chain crosses the membrane as a helical span at residues 7–29; sequence LKGFFIGLLSGAVVLGLTFAVLI. Over 30–41 the chain is Cytoplasmic; sequence AISQIDKVQRSL.

This sequence belongs to the PsbX family. Type 1 subfamily. PSII is composed of 1 copy each of membrane proteins PsbA, PsbB, PsbC, PsbD, PsbE, PsbF, PsbH, PsbI, PsbJ, PsbK, PsbL, PsbM, PsbT, PsbX, PsbY, PsbZ, Psb30/Ycf12, peripheral proteins PsbO, CyanoQ (PsbQ), PsbU, PsbV and a large number of cofactors. It forms dimeric complexes. Part of a photosystem II (PSII) assembly intermediate complex PSII-I; crystallized from a strain deleted of psbJ, it forms monomeric PSII before addition of the oxygen evolving complex. PSII-I includes 3 assembly factors not found in mature PSII (Psb27, Psb28 and Psb34). PSII binds multiple chlorophylls, carotenoids and specific lipids. is required as a cofactor.

The protein resides in the cellular thylakoid membrane. In terms of biological role, involved in the binding and/or turnover of quinones at the Q(B) site of photosystem II (PSII). PSII is a light-driven water plastoquinone oxidoreductase, using light energy to abstract electrons from H(2)O, generating a proton gradient subsequently used for ATP formation. This is Photosystem II reaction center protein X from Thermosynechococcus vestitus (strain NIES-2133 / IAM M-273 / BP-1).